Here is a 177-residue protein sequence, read N- to C-terminus: Large ribosomal subunit protein uL6 (177 aa).

This sequence belongs to the universal ribosomal protein uL6 family. As to quaternary structure, part of the 50S ribosomal subunit.

Its function is as follows. This protein binds to the 23S rRNA, and is important in its secondary structure. It is located near the subunit interface in the base of the L7/L12 stalk, and near the tRNA binding site of the peptidyltransferase center. In Vibrio cholerae serotype O1 (strain ATCC 39541 / Classical Ogawa 395 / O395), this protein is Large ribosomal subunit protein uL6.